Reading from the N-terminus, the 292-residue chain is 4-diphosphocytidyl-2-C-methyl-D-erythritol kinase (292 aa).

Lysine 13 is an active-site residue. 97–107 (PVAAGLAGGSS) serves as a coordination point for ATP. Aspartate 139 is a catalytic residue.

This sequence belongs to the GHMP kinase family. IspE subfamily.

It catalyses the reaction 4-CDP-2-C-methyl-D-erythritol + ATP = 4-CDP-2-C-methyl-D-erythritol 2-phosphate + ADP + H(+). Its pathway is isoprenoid biosynthesis; isopentenyl diphosphate biosynthesis via DXP pathway; isopentenyl diphosphate from 1-deoxy-D-xylulose 5-phosphate: step 3/6. In terms of biological role, catalyzes the phosphorylation of the position 2 hydroxy group of 4-diphosphocytidyl-2C-methyl-D-erythritol. This is 4-diphosphocytidyl-2-C-methyl-D-erythritol kinase from Bacillus thuringiensis (strain Al Hakam).